We begin with the raw amino-acid sequence, 188 residues long: MSIKSDKWIRRMAAEYGMIEPFEPGQVKQKDGHSIVSYGTSSYGYDIRCSDEFKLFTNLNSTIVDPKRFDSNSFVDLKNDICIIPPNSFALARTVEYFRIPRNVLTICLGKSTYARCGIIVNVTPFEPEWEGYVTLEFSNTTPLPAKIYANEGVAQVIFFEADEVCETSYKDRKGKYQFQQGVTLPKI.

Residues 111–116 (KSTYAR), 135–137 (TLE), Gln-156, Tyr-170, and Gln-180 each bind dCTP. Residue Glu-137 is the Proton donor/acceptor of the active site.

It belongs to the dCTP deaminase family. Homotrimer.

The enzyme catalyses dCTP + H2O + H(+) = dUTP + NH4(+). It functions in the pathway pyrimidine metabolism; dUMP biosynthesis; dUMP from dCTP (dUTP route): step 1/2. Its function is as follows. Catalyzes the deamination of dCTP to dUTP. The polypeptide is dCTP deaminase (Nitrosomonas eutropha (strain DSM 101675 / C91 / Nm57)).